A 168-amino-acid chain; its full sequence is Small ribosomal subunit protein uS7c (168 aa).

Belongs to the universal ribosomal protein uS7 family. In terms of assembly, part of the 30S ribosomal subunit.

Its subcellular location is the plastid. The protein resides in the chloroplast. In terms of biological role, one of the primary rRNA binding proteins, it binds directly to 16S rRNA where it nucleates assembly of the head domain of the 30S subunit. This is Small ribosomal subunit protein uS7c (rps7) from Chlamydomonas reinhardtii (Chlamydomonas smithii).